A 404-amino-acid polypeptide reads, in one-letter code: Diphosphomevalonate decarboxylase mvd1 (404 aa).

Residues 25-28, R82, 161-166, and T217 contribute to the (R)-5-diphosphomevalonate site; these read YWGK and SGSACR.

Belongs to the diphosphomevalonate decarboxylase family. As to quaternary structure, homodimer.

It carries out the reaction (R)-5-diphosphomevalonate + ATP = isopentenyl diphosphate + ADP + phosphate + CO2. The protein operates within isoprenoid biosynthesis; isopentenyl diphosphate biosynthesis via mevalonate pathway; isopentenyl diphosphate from (R)-mevalonate: step 3/3. Diphosphomevalonate decarboxylase; part of the second module of ergosterol biosynthesis pathway that includes the middle steps of the pathway. Mvd1 converts diphosphomevalonate into isopentenyl diphosphate. The second module is carried out in the vacuole and involves the formation of farnesyl diphosphate, which is also an important intermediate in the biosynthesis of ubiquinone, dolichol, heme and prenylated proteins. Activity by the mevalonate kinase erg12 (AFUA_4G07780) first converts mevalonate into 5-phosphomevalonate. 5-phosphomevalonate is then further converted to 5-diphosphomevalonate by the phosphomevalonate kinase erg8 (AFUA_5G10680). The diphosphomevalonate decarboxylase mvd1 (AFUA_4G07130) then produces isopentenyl diphosphate. The isopentenyl-diphosphate delta-isomerase idi1 (AFUA_6G11160) then catalyzes the 1,3-allylic rearrangement of the homoallylic substrate isopentenyl (IPP) to its highly electrophilic allylic isomer, dimethylallyl diphosphate (DMAPP). Finally the farnesyl diphosphate synthase erg20 (AFUA_5G02450) catalyzes the sequential condensation of isopentenyl pyrophosphate with dimethylallyl pyrophosphate, and then with the resultant geranylpyrophosphate to the ultimate product farnesyl pyrophosphate. The chain is Diphosphomevalonate decarboxylase mvd1 from Aspergillus fumigatus (strain ATCC MYA-4609 / CBS 101355 / FGSC A1100 / Af293) (Neosartorya fumigata).